We begin with the raw amino-acid sequence, 85 residues long: Large ribosomal subunit protein bL27 (85 aa).

The segment at 1–21 (MAHKKGGGSTKNGRDSNPKYL) is disordered.

This sequence belongs to the bacterial ribosomal protein bL27 family.

The chain is Large ribosomal subunit protein bL27 from Chlorobium chlorochromatii (strain CaD3).